The chain runs to 1655 residues: MAQKPNFLKKLISAGLVTASTATIVASFAGSAMGAAIQQNRTTNAVATTVDGVGFDQTAVPANVAVPLNAVITAGVNKGITLNTPAGSFNGLFLNTANNLDVTVREDTTLGFITNVVNNANHFNLMLNAGKTLTITGQGITNVQAAATKNANNVVAQVNNGAAIDNNDLQGVGRIDCGAAASTLVFNLANPTTQKAPLILGDNAVIVNGANGTLNVTNGFIKVSSKSFATVNVINIGDGQGIMFNTDADNVNTLNLQANGATITFNGTDGTGRLVLLSKNAAATDFNVTGSLGGNLKGIIEFNTVAVNGQLKANAGANAAVIGTNNGAGRAAGFVVSVDNGKVATIDGQVYAKDMVIQSANAVGQVNFRHIVDVGTDGTTAFKTAASKVAITQNSNFGTTDFGNLAAQIIVPNTMTLNGNFTGDASNPGNTAGVITFDANGTLASASADANVAVTNNITAIEASGAGVVQLSGTHAAELRLGNAGSVFKLADGTVINGKVNQTALVGGALAAGTITLDGSATITGDIGNAGGAAALQGITLANDATKTLTLGGANIIGANGGTINFQANGGTIKLTSTQNNIVVDFDLAIATDQTGVVDASSLTNAQTLTINGKIGTVGANNKTLGQFNIGSSKTVLSDGDVAINELVIGNNGAVQFAHNTYLITRTTNAAGQGKIIFNPVVNNNTTLATGTNLGSATNPLAEINFGSKGAANVDTVLNVGKGVNLYATNITTTDANVGSFIFNAGGTNIVSGTVGGQQGNKFNTVALDNGTTVKFLGNATFNGNTTIAANSTLQIGGNYTADFVASADGTGIVEFVNTGPITVTLNKQAAPVNALKQITVSGPGNVVINEIGNAGNYHGAVTDTIAFENSSLGAVVFLPRGIPFNDAGNRIPLTIKSTVGNKTATGFDVPSVIVLGVDSVIADGQVIGDQNNIVGLGLGSDNDIIVNATTLYAGIGTINNNQGTVTLSGGIPNTPGTVYGLGTGIGASKFKQVTFTTDYNNLGNIIATNATINDGVTVTTGGIAGIGFDGKITLGSVNGNGNVRFVDGILSHSTSMIGTTKANNGTVTYLGNAFVGNIGDSDTPVASVRFTGSDGGAGLQGNIYSQVIDFGTYNLGISNSNVILGGGTTAINGKINLRTNTLTFASGTSTWGNNTSIETTLTLANGNIGNIVILEGAQVNATTTGTTTIKVQDNANANFSGTQTYTLIQGGARFNGTLGGPNFVVTGSNRFVNYGLIRAANQDYVITRTNNAENVVTNDIANSSFGGAPGVGQNVTTFVNATNTAAYNNLLLAKNSANSANFVGAIVTDTSAAITNAQLDVAKDIQAQLGNRLGALRYLGTPETAEMAGPEAGAIPAAVAAGDEAVDNVAYGIWAKPFYTDAHQSKKGGLAGYKAKTTGVVIGLDTLANDNLMIGAAIGITKTDIKHQDYKKGDKTDVNGFSFSLYGAQQLVKNFFAQGSAIFSLNQVKNKSQRYFFDANGNMSKQIAAGHYDNMTFGGNLTVGYDYNAMQGVLVTPMAGLSYLKSSDENYKETGTTVANKQVNSKFSDRTDLIVGAKVAGSTMNITDLAVYPEVHAFVVHKVTGRLSKTQSVLDGQVTPCISQPDRTAKTSYNLGLSASIRSDAKMEYGIGYDAQISSKYTAHQGTLKVRVNF.

The propeptide occupies 1335 to 1362 (GALRYLGTPETAEMAGPEAGAIPAAVAA). The 289-residue stretch at 1367 to 1655 (VDNVAYGIWA…QGTLKVRVNF (289 aa)) folds into the Autotransporter domain.

The protein belongs to the rickettsiae OmpA/OmpB family.

Its subcellular location is the periplasm. The protein resides in the secreted. It localises to the cell surface. It is found in the cell outer membrane. Functionally, the 120 kDa surface-exposed protein is a major structural protein which may play a role as a rickettsial virulence factor and/or immunogen during infection. In terms of biological role, the 32 kDa beta peptide may serve as a membrane anchor. It has been shown to adhere to biotinylated Vero cell proteins. The chain is Outer membrane protein B (ompB) from Rickettsia conorii (strain ATCC VR-613 / Malish 7).